A 411-amino-acid polypeptide reads, in one-letter code: LIM domain-binding protein 1 (411 aa).

Disordered regions lie at residues 284–330 (PPAE…TFAL) and 367–411 (DAAN…QASQ). Low complexity predominate over residues 302–318 (SGGSTMSSGGGNTNNSN). Positions 336–375 (DVMVVGEPTLMGGEFGDEDERLITRLENTQFDAANGIDDE) constitute an LIM interaction domain (LID) domain.

It belongs to the LDB family. As to quaternary structure, forms homodimers and heterodimers. As to expression, first expressed at stages 15-16 in presumptive limb mesoderm. As limb outgrowth proceeds, expressed in the entire limb bud, concentrating in the distal mesoderm throughout limb development. Both hindlimbs and forelimbs exhibit similar expression patterns.

It localises to the nucleus. Its function is as follows. Binds to the LIM domain of a wide variety of LIM domain-containing transcription factors. The sequence is that of LIM domain-binding protein 1 from Gallus gallus (Chicken).